We begin with the raw amino-acid sequence, 344 residues long: Anthranilate phosphoribosyltransferase (344 aa).

5-phospho-alpha-D-ribose 1-diphosphate contacts are provided by residues glycine 80, glycine 83 to aspartate 84, threonine 88, asparagine 90 to threonine 93, lysine 108 to serine 116, and serine 120. Glycine 80 contacts anthranilate. Serine 92 lines the Mg(2+) pocket. Position 111 (asparagine 111) interacts with anthranilate. An anthranilate-binding site is contributed by arginine 166. Mg(2+) is bound by residues aspartate 225 and glutamate 226.

This sequence belongs to the anthranilate phosphoribosyltransferase family. Homodimer. The cofactor is Mg(2+).

It carries out the reaction N-(5-phospho-beta-D-ribosyl)anthranilate + diphosphate = 5-phospho-alpha-D-ribose 1-diphosphate + anthranilate. It functions in the pathway amino-acid biosynthesis; L-tryptophan biosynthesis; L-tryptophan from chorismate: step 2/5. In terms of biological role, catalyzes the transfer of the phosphoribosyl group of 5-phosphorylribose-1-pyrophosphate (PRPP) to anthranilate to yield N-(5'-phosphoribosyl)-anthranilate (PRA). This is Anthranilate phosphoribosyltransferase from Legionella pneumophila (strain Paris).